We begin with the raw amino-acid sequence, 147 residues long: Small ribosomal subunit protein bS16 (147 aa).

The tract at residues Q81–A147 is disordered. Basic and acidic residues-rich tracts occupy residues Q95–L104 and E114–E125. Over residues G126–N140 the composition is skewed to low complexity.

It belongs to the bacterial ribosomal protein bS16 family.

This Cutibacterium acnes (strain DSM 16379 / KPA171202) (Propionibacterium acnes) protein is Small ribosomal subunit protein bS16.